A 177-amino-acid chain; its full sequence is Large ribosomal subunit protein uL10 (177 aa).

The protein belongs to the universal ribosomal protein uL10 family. Part of the ribosomal stalk of the 50S ribosomal subunit. The N-terminus interacts with L11 and the large rRNA to form the base of the stalk. The C-terminus forms an elongated spine to which L12 dimers bind in a sequential fashion forming a multimeric L10(L12)X complex.

Its function is as follows. Forms part of the ribosomal stalk, playing a central role in the interaction of the ribosome with GTP-bound translation factors. This Leptospira biflexa serovar Patoc (strain Patoc 1 / Ames) protein is Large ribosomal subunit protein uL10.